Here is a 448-residue protein sequence, read N- to C-terminus: Chaperone SurA (448 aa).

A signal peptide spans 1–27; sequence MKKTLRFAAVAAGLVASLITVAPSASA. 2 consecutive PpiC domains span residues 185-288 and 301-399; these read QQDL…RLVD and IVQT…QVLG. The tract at residues 230 to 249 is disordered; that stretch reads LAKSQSEADDAKKGGDLGFK.

The protein localises to the periplasm. It catalyses the reaction [protein]-peptidylproline (omega=180) = [protein]-peptidylproline (omega=0). Its function is as follows. Chaperone involved in the correct folding and assembly of outer membrane proteins. Recognizes specific patterns of aromatic residues and the orientation of their side chains, which are found more frequently in integral outer membrane proteins. May act in both early periplasmic and late outer membrane-associated steps of protein maturation. In Burkholderia thailandensis (strain ATCC 700388 / DSM 13276 / CCUG 48851 / CIP 106301 / E264), this protein is Chaperone SurA.